The following is a 183-amino-acid chain: Threonylcarbamoyl-AMP synthase (183 aa).

In terms of domain architecture, YrdC-like spans 1-183 (MNFTEIAEKL…LLTDQLIREG (183 aa)).

This sequence belongs to the SUA5 family. TsaC subfamily.

It is found in the cytoplasm. The enzyme catalyses L-threonine + hydrogencarbonate + ATP = L-threonylcarbamoyladenylate + diphosphate + H2O. Its function is as follows. Required for the formation of a threonylcarbamoyl group on adenosine at position 37 (t(6)A37) in tRNAs that read codons beginning with adenine. Catalyzes the conversion of L-threonine, HCO(3)(-)/CO(2) and ATP to give threonylcarbamoyl-AMP (TC-AMP) as the acyladenylate intermediate, with the release of diphosphate. This chain is Threonylcarbamoyl-AMP synthase, found in Actinobacillus succinogenes (strain ATCC 55618 / DSM 22257 / CCUG 43843 / 130Z).